The following is a 65-amino-acid chain: Large ribosomal subunit protein uL30 (65 aa).

The protein belongs to the universal ribosomal protein uL30 family. Part of the 50S ribosomal subunit.

This chain is Large ribosomal subunit protein uL30, found in Brucella suis (strain ATCC 23445 / NCTC 10510).